The chain runs to 353 residues: Phosphoribosylformylglycinamidine cyclo-ligase (353 aa).

Belongs to the AIR synthase family.

The protein localises to the cytoplasm. It catalyses the reaction 2-formamido-N(1)-(5-O-phospho-beta-D-ribosyl)acetamidine + ATP = 5-amino-1-(5-phospho-beta-D-ribosyl)imidazole + ADP + phosphate + H(+). It participates in purine metabolism; IMP biosynthesis via de novo pathway; 5-amino-1-(5-phospho-D-ribosyl)imidazole from N(2)-formyl-N(1)-(5-phospho-D-ribosyl)glycinamide: step 2/2. In Symbiobacterium thermophilum (strain DSM 24528 / JCM 14929 / IAM 14863 / T), this protein is Phosphoribosylformylglycinamidine cyclo-ligase.